We begin with the raw amino-acid sequence, 216 residues long: Small ribosomal subunit protein uS5 (216 aa).

The disordered stretch occupies residues 1 to 55; that stretch reads MDRKLENQKDLLNQDPKVELNSQSVAKNPLNSREVKPIQRRRPLRKNSRDKNSKP. The segment covering 20 to 31 has biased composition (polar residues); that stretch reads LNSQSVAKNPLN. Residues 57–120 form the S5 DRBM domain; that stretch reads FEERVIAIHR…KDAQNRLVSV (64 aa).

The protein belongs to the universal ribosomal protein uS5 family. In terms of assembly, part of the 30S ribosomal subunit. Contacts proteins S4 and S8.

Its function is as follows. With S4 and S12 plays an important role in translational accuracy. Functionally, located at the back of the 30S subunit body where it stabilizes the conformation of the head with respect to the body. In Mesomycoplasma hyopneumoniae (strain J / ATCC 25934 / NCTC 10110) (Mycoplasma hyopneumoniae), this protein is Small ribosomal subunit protein uS5.